A 91-amino-acid chain; its full sequence is Small ribosomal subunit protein bS20 (91 aa).

The interval 1–25 (MANSPSAKKRAKQAEKRRSHNASLR) is disordered. The span at 7 to 20 (AKKRAKQAEKRRSH) shows a compositional bias: basic residues.

This sequence belongs to the bacterial ribosomal protein bS20 family.

Binds directly to 16S ribosomal RNA. This Azotobacter vinelandii (strain DJ / ATCC BAA-1303) protein is Small ribosomal subunit protein bS20.